We begin with the raw amino-acid sequence, 53 residues long: Large ribosomal subunit protein bL33 (53 aa).

This sequence belongs to the bacterial ribosomal protein bL33 family.

This chain is Large ribosomal subunit protein bL33, found in Ureaplasma parvum serovar 3 (strain ATCC 27815 / 27 / NCTC 11736).